A 207-amino-acid chain; its full sequence is Ion-translocating oxidoreductase complex subunit G (207 aa).

The chain crosses the membrane as a helical span at residues 11–31 (GILLGFIALLCTIISAGIYFL). The residue at position 175 (threonine 175) is an FMN phosphoryl threonine.

It belongs to the RnfG family. The complex is composed of six subunits: RnfA, RnfB, RnfC, RnfD, RnfE and RnfG. Requires FMN as cofactor.

Its subcellular location is the cell inner membrane. Part of a membrane-bound complex that couples electron transfer with translocation of ions across the membrane. The sequence is that of Ion-translocating oxidoreductase complex subunit G from Haemophilus influenzae (strain PittEE).